The following is a 123-amino-acid chain: Large ribosomal subunit protein bL12 (123 aa).

The protein belongs to the bacterial ribosomal protein bL12 family. In terms of assembly, homodimer. Part of the ribosomal stalk of the 50S ribosomal subunit. Forms a multimeric L10(L12)X complex, where L10 forms an elongated spine to which 2 to 4 L12 dimers bind in a sequential fashion. Binds GTP-bound translation factors.

In terms of biological role, forms part of the ribosomal stalk which helps the ribosome interact with GTP-bound translation factors. Is thus essential for accurate translation. The polypeptide is Large ribosomal subunit protein bL12 (Mycoplasmopsis synoviae (strain 53) (Mycoplasma synoviae)).